The chain runs to 364 residues: CCA-adding enzyme (364 aa).

G19 and R22 together coordinate ATP. 2 residues coordinate CTP: G19 and R22. Mg(2+)-binding residues include D32 and D34. ATP is bound by residues R102, R148, and R151. Positions 102, 148, and 151 each coordinate CTP.

It belongs to the tRNA nucleotidyltransferase/poly(A) polymerase family. Bacterial CCA-adding enzyme type 2 subfamily. Mg(2+) is required as a cofactor.

It catalyses the reaction a tRNA precursor + 2 CTP + ATP = a tRNA with a 3' CCA end + 3 diphosphate. It carries out the reaction a tRNA with a 3' CCA end + 2 CTP + ATP = a tRNA with a 3' CCACCA end + 3 diphosphate. Functionally, catalyzes the addition and repair of the essential 3'-terminal CCA sequence in tRNAs without using a nucleic acid template. Adds these three nucleotides in the order of C, C, and A to the tRNA nucleotide-73, using CTP and ATP as substrates and producing inorganic pyrophosphate. tRNA 3'-terminal CCA addition is required both for tRNA processing and repair. Also involved in tRNA surveillance by mediating tandem CCA addition to generate a CCACCA at the 3' terminus of unstable tRNAs. While stable tRNAs receive only 3'-terminal CCA, unstable tRNAs are marked with CCACCA and rapidly degraded. The protein is CCA-adding enzyme of Bordetella bronchiseptica (strain ATCC BAA-588 / NCTC 13252 / RB50) (Alcaligenes bronchisepticus).